The chain runs to 282 residues: Shikimate dehydrogenase (NADP(+)) (282 aa).

Residues 16–18 (SLS) and T63 contribute to the shikimate site. K67 serves as the catalytic Proton acceptor. Positions 88 and 103 each coordinate shikimate. Residues 128-132 (GAGGA) and L219 contribute to the NADP(+) site. Shikimate is bound at residue Y221. Residue G243 participates in NADP(+) binding.

The protein belongs to the shikimate dehydrogenase family. As to quaternary structure, homodimer.

It carries out the reaction shikimate + NADP(+) = 3-dehydroshikimate + NADPH + H(+). Its pathway is metabolic intermediate biosynthesis; chorismate biosynthesis; chorismate from D-erythrose 4-phosphate and phosphoenolpyruvate: step 4/7. Functionally, involved in the biosynthesis of the chorismate, which leads to the biosynthesis of aromatic amino acids. Catalyzes the reversible NADPH linked reduction of 3-dehydroshikimate (DHSA) to yield shikimate (SA). The protein is Shikimate dehydrogenase (NADP(+)) of Xylella fastidiosa (strain M12).